We begin with the raw amino-acid sequence, 639 residues long: Eukaryotic translation initiation factor 2-alpha kinase 2 (639 aa).

One can recognise a Protein kinase domain in the interval 171 to 588 (FEEYSLLGRG…LEVLNCGLLL (418 aa)). Residues 177–185 (LGRGGFGSV) and K200 contribute to the ATP site. Positions 298–320 (ISTSRKSSYSSTTESSNFENLES) are enriched in low complexity. Residues 298-322 (ISTSRKSSYSSTTESSNFENLESPR) are disordered. D417 (proton acceptor) is an active-site residue.

Belongs to the protein kinase superfamily. Ser/Thr protein kinase family. GCN2 subfamily. Post-translationally, autophosphorylated.

The enzyme catalyses L-seryl-[protein] + ATP = O-phospho-L-seryl-[protein] + ADP + H(+). It carries out the reaction L-threonyl-[protein] + ATP = O-phospho-L-threonyl-[protein] + ADP + H(+). Mediates down-regulation of protein synthesis in response to stress conditions by the phosphorylation of the alpha subunit of eIF-2 (tif211) on 'Ser-52'. Protein synthesis is inhibited at the level of initiation. Activity is inhibited in the presence of heme. The sequence is that of Eukaryotic translation initiation factor 2-alpha kinase 2 (hri2) from Schizosaccharomyces pombe (strain 972 / ATCC 24843) (Fission yeast).